The following is an 887-amino-acid chain: Alanine--tRNA ligase (887 aa).

Zn(2+)-binding residues include His-581, His-585, Cys-683, and His-687.

It belongs to the class-II aminoacyl-tRNA synthetase family. Requires Zn(2+) as cofactor.

It is found in the cytoplasm. It catalyses the reaction tRNA(Ala) + L-alanine + ATP = L-alanyl-tRNA(Ala) + AMP + diphosphate. In terms of biological role, catalyzes the attachment of alanine to tRNA(Ala) in a two-step reaction: alanine is first activated by ATP to form Ala-AMP and then transferred to the acceptor end of tRNA(Ala). Also edits incorrectly charged Ser-tRNA(Ala) and Gly-tRNA(Ala) via its editing domain. The protein is Alanine--tRNA ligase of Ehrlichia ruminantium (strain Gardel).